The following is an 83-amino-acid chain: uncharacterized protein (83 aa).

Residues 50–70 (IMVFLGEAWIILIPFAIFCII) form a helical membrane-spanning segment.

The protein belongs to the plectrovirus ORF7 family.

It is found in the host membrane. This is an uncharacterized protein from Spiroplasma citri (SpV1).